We begin with the raw amino-acid sequence, 152 residues long: Deoxyuridine 5'-triphosphate nucleotidohydrolase (152 aa).

Residues 71 to 73, asparagine 84, 88 to 90, and methionine 98 each bind substrate; these read RSG and LID.

The protein belongs to the dUTPase family. Mg(2+) is required as a cofactor.

It carries out the reaction dUTP + H2O = dUMP + diphosphate + H(+). Its pathway is pyrimidine metabolism; dUMP biosynthesis; dUMP from dCTP (dUTP route): step 2/2. Its function is as follows. This enzyme is involved in nucleotide metabolism: it produces dUMP, the immediate precursor of thymidine nucleotides and it decreases the intracellular concentration of dUTP so that uracil cannot be incorporated into DNA. This is Deoxyuridine 5'-triphosphate nucleotidohydrolase from Cronobacter sakazakii (strain ATCC BAA-894) (Enterobacter sakazakii).